The chain runs to 593 residues: MSDLKTALGEAVEAAFAAEGVPAELARVTASDRPDLADFQSNGALAAAKRVGKNPREIATAVAGRLQGDPRLASVEIAGPGFLNLKVADAALAARADAIAADPRAGAGTVPAPRRVIVDYGGPNVAKPMHVGHLRASIIGESVKRLYRFRGDTVIGDAHFGDWGYQMGLLIGAVCDEDAEIRALVDQLNASGDPNGEIPAAFERVTLADLDRLYPLAAAKGKEDPAYRDRARKLTADLQAHKPGCYLLWRRFRDVTQVALERDFHALGVDFDWWKGESDVDHLIQPMVAELADKGLLVDDQGARIVRVAREGDKRELPPLLVVSSEGSAMYGTTDLATILDRKREFDPQLVIYCVDQRQADHFEIVFRAAYLAGYAEEGQLEHIGFGTMNGTDGKPFKTREGGVLKLADLIEMTRSKARERLHEAGLGEDLPAEEFEDIAGKVAVAALKFADLSNFRGTSYVFDLDRFTSFEGKTGPYLLYQAVRVKSLLRKAEAEGAQAGPVTVAEPAERDLVLTLDAFETALQEAYDKKAPNALAEHAYRLSQAFSKFYAACPILAAPPPVRGSRLTLAQATLRQLELALDILGIAVPERM.

Residues 123–133 carry the 'HIGH' region motif; the sequence is PNVAKPMHVGH.

The protein belongs to the class-I aminoacyl-tRNA synthetase family. In terms of assembly, monomer.

The protein localises to the cytoplasm. The enzyme catalyses tRNA(Arg) + L-arginine + ATP = L-arginyl-tRNA(Arg) + AMP + diphosphate. This Phenylobacterium zucineum (strain HLK1) protein is Arginine--tRNA ligase.